Here is a 162-residue protein sequence, read N- to C-terminus: Non-specific lipid transfer protein GPI-anchored 27 (162 aa).

The first 29 residues, 1–29 (MAYTNKVAVAVGAAVVFLAVVMNPRWTEA), serve as a signal peptide directing secretion. 4 disulfides stabilise this stretch: C39-C78, C50-C62, C63-C102, and C76-C110. An N-linked (GlcNAc...) asparagine glycan is attached at N68. 2 N-linked (GlcNAc...) asparagine glycosylation sites follow: N124 and N135. A lipid anchor (GPI-anchor amidated serine) is attached at S137. A propeptide spans 138–162 (VGGKNKVATSMSAFGLVAILLFVMF) (removed in mature form).

It belongs to the plant LTP family.

It is found in the cell membrane. In terms of biological role, probable lipid transfer protein. The polypeptide is Non-specific lipid transfer protein GPI-anchored 27 (Arabidopsis thaliana (Mouse-ear cress)).